The following is a 140-amino-acid chain: Hemoglobin subunit alpha-D (140 aa).

The region spanning 1–140 is the Globin domain; the sequence is MLTDSDKKLV…VCTVLAEKYR (140 aa). Histidine 57 and histidine 86 together coordinate heme b.

The protein belongs to the globin family. As to quaternary structure, heterotetramer of two alpha-D chains and two beta chains. As to expression, red blood cells.

In terms of biological role, involved in oxygen transport from the lung to the various peripheral tissues. In Columba livia (Rock dove), this protein is Hemoglobin subunit alpha-D (HBAD).